A 517-amino-acid polypeptide reads, in one-letter code: Glucose-6-phosphate isomerase (517 aa).

The active-site Proton donor is E345. Active-site residues include H376 and K490.

It belongs to the GPI family.

Its subcellular location is the cytoplasm. It carries out the reaction alpha-D-glucose 6-phosphate = beta-D-fructose 6-phosphate. Its pathway is carbohydrate biosynthesis; gluconeogenesis. It participates in carbohydrate degradation; glycolysis; D-glyceraldehyde 3-phosphate and glycerone phosphate from D-glucose: step 2/4. Functionally, catalyzes the reversible isomerization of glucose-6-phosphate to fructose-6-phosphate. The polypeptide is Glucose-6-phosphate isomerase (Erythrobacter litoralis (strain HTCC2594)).